Here is a 404-residue protein sequence, read N- to C-terminus: Putative glutamate--cysteine ligase 2 (404 aa).

Residues 377–404 (GPAGKRAHEGGRSFRPAAGAPMSIRGQE) are disordered.

The protein belongs to the glutamate--cysteine ligase type 2 family. YbdK subfamily.

The catalysed reaction is L-cysteine + L-glutamate + ATP = gamma-L-glutamyl-L-cysteine + ADP + phosphate + H(+). ATP-dependent carboxylate-amine ligase which exhibits weak glutamate--cysteine ligase activity. The polypeptide is Putative glutamate--cysteine ligase 2 (Pseudomonas aeruginosa (strain UCBPP-PA14)).